We begin with the raw amino-acid sequence, 453 residues long: Allantoinase (453 aa).

Zn(2+)-binding residues include His-59, His-61, Lys-146, His-186, His-242, and Asp-315. At Lys-146 the chain carries N6-carboxylysine.

The protein belongs to the metallo-dependent hydrolases superfamily. Allantoinase family. As to quaternary structure, homotetramer. Zn(2+) serves as cofactor. In terms of processing, carboxylation allows a single lysine to coordinate two zinc ions.

It carries out the reaction (S)-allantoin + H2O = allantoate + H(+). The protein operates within nitrogen metabolism; (S)-allantoin degradation; allantoate from (S)-allantoin: step 1/1. Functionally, catalyzes the conversion of allantoin (5-ureidohydantoin) to allantoic acid by hydrolytic cleavage of the five-member hydantoin ring. This is Allantoinase from Salmonella agona (strain SL483).